Reading from the N-terminus, the 318-residue chain is uncharacterized protein (318 aa).

Belongs to the glycosyltransferase 2 family.

This is an uncharacterized protein from Rickettsia prowazekii (strain Madrid E).